The primary structure comprises 919 residues: Periodic tryptophan protein 2 homolog (919 aa).

WD repeat units lie at residues 12–50 (GTVY…SDTL), 53–93 (ATRY…LHHF), 94–132 (HFKG…REFN), 142–181 (GPYD…NLIY), and 186–225 (GHKD…EGLR). Residues 238-267 (QREEEEEEEEDQEGDRETTIRGKATPAEEE) are disordered. A compositionally biased stretch (acidic residues) spans 240–251 (EEEEEEEEDQEG). Basic and acidic residues predominate over residues 252 to 267 (DRETTIRGKATPAEEE). WD repeat units follow at residues 286 to 325 (GDFN…LIHS), 328 to 368 (ISDQ…YVLK), 371 to 410 (GHFN…CFVT), 413 to 452 (EHSS…NFRT), 456 to 498 (PRPT…DVLS), 499 to 538 (GHEG…RTKE), 541 to 580 (ALTS…QTGS), 603 to 642 (AKGK…LMKR), and 700 to 740 (KPEI…DPFE). The tract at residues 882-919 (TKRSLDPLGSEEEAEASEDDSLHLLGGGGRDSEEEMLA) is disordered. The span at 890–900 (GSEEEAEASED) shows a compositional bias: acidic residues. 2 positions are modified to phosphoserine: Ser898 and Ser902.

The protein belongs to the WD repeat PWP2 family. Part of the small subunit (SSU) processome, composed of more than 70 proteins and the RNA chaperone small nucleolar RNA (snoRNA) U3.

Its subcellular location is the nucleus. It is found in the nucleolus. In terms of biological role, part of the small subunit (SSU) processome, first precursor of the small eukaryotic ribosomal subunit. During the assembly of the SSU processome in the nucleolus, many ribosome biogenesis factors, an RNA chaperone and ribosomal proteins associate with the nascent pre-rRNA and work in concert to generate RNA folding, modifications, rearrangements and cleavage as well as targeted degradation of pre-ribosomal RNA by the RNA exosome. In Homo sapiens (Human), this protein is Periodic tryptophan protein 2 homolog.